A 166-amino-acid chain; its full sequence is Lipoprotein signal peptidase (166 aa).

A run of 3 helical transmembrane segments spans residues 12 to 32, 70 to 90, and 102 to 122; these read WLWL…LILQ, WFFA…MYRA, and ALII…GFVV. Active-site residues include Asp-123 and Asp-141. The chain crosses the membrane as a helical span at residues 142–162; it reads SAICFGAAMIVLEGFLPNAAA.

This sequence belongs to the peptidase A8 family.

The protein resides in the cell inner membrane. It carries out the reaction Release of signal peptides from bacterial membrane prolipoproteins. Hydrolyzes -Xaa-Yaa-Zaa-|-(S,diacylglyceryl)Cys-, in which Xaa is hydrophobic (preferably Leu), and Yaa (Ala or Ser) and Zaa (Gly or Ala) have small, neutral side chains.. It functions in the pathway protein modification; lipoprotein biosynthesis (signal peptide cleavage). Its function is as follows. This protein specifically catalyzes the removal of signal peptides from prolipoproteins. This chain is Lipoprotein signal peptidase, found in Enterobacter sp. (strain 638).